The primary structure comprises 347 residues: Phosphoribosylformylglycinamidine cyclo-ligase (347 aa).

It belongs to the AIR synthase family.

It localises to the cytoplasm. The catalysed reaction is 2-formamido-N(1)-(5-O-phospho-beta-D-ribosyl)acetamidine + ATP = 5-amino-1-(5-phospho-beta-D-ribosyl)imidazole + ADP + phosphate + H(+). The protein operates within purine metabolism; IMP biosynthesis via de novo pathway; 5-amino-1-(5-phospho-D-ribosyl)imidazole from N(2)-formyl-N(1)-(5-phospho-D-ribosyl)glycinamide: step 2/2. The polypeptide is Phosphoribosylformylglycinamidine cyclo-ligase (Desulfatibacillum aliphaticivorans).